Consider the following 570-residue polypeptide: Sulfite reductase [NADPH] hemoprotein beta-component (570 aa).

[4Fe-4S] cluster is bound by residues C434, C440, C479, and C483. C483 contributes to the siroheme binding site.

The protein belongs to the nitrite and sulfite reductase 4Fe-4S domain family. As to quaternary structure, alpha(8)-beta(8). The alpha component is a flavoprotein, the beta component is a hemoprotein. The cofactor is siroheme. It depends on [4Fe-4S] cluster as a cofactor.

The catalysed reaction is hydrogen sulfide + 3 NADP(+) + 3 H2O = sulfite + 3 NADPH + 4 H(+). It participates in sulfur metabolism; hydrogen sulfide biosynthesis; hydrogen sulfide from sulfite (NADPH route): step 1/1. In terms of biological role, component of the sulfite reductase complex that catalyzes the 6-electron reduction of sulfite to sulfide. This is one of several activities required for the biosynthesis of L-cysteine from sulfate. The protein is Sulfite reductase [NADPH] hemoprotein beta-component of Cronobacter sakazakii (strain ATCC BAA-894) (Enterobacter sakazakii).